Reading from the N-terminus, the 221-residue chain is uncharacterized protein (221 aa).

This is an uncharacterized protein from Acanthamoeba polyphaga (Amoeba).